The chain runs to 135 residues: ATP synthase epsilon chain (135 aa).

Belongs to the ATPase epsilon chain family. F-type ATPases have 2 components, CF(1) - the catalytic core - and CF(0) - the membrane proton channel. CF(1) has five subunits: alpha(3), beta(3), gamma(1), delta(1), epsilon(1). CF(0) has three main subunits: a, b and c.

It localises to the cell inner membrane. Produces ATP from ADP in the presence of a proton gradient across the membrane. This chain is ATP synthase epsilon chain, found in Rhizobium rhizogenes (strain K84 / ATCC BAA-868) (Agrobacterium radiobacter).